A 135-amino-acid chain; its full sequence is Histone H3 type 3 (135 aa).

A disordered region spans residues 1-40 (MARTKQTARKSTGGKAPRKQLATKAARKTPATGGVKKPHR). An N6-methyllysine modification is found at Lys-5. The residue at position 10 (Lys-10) is an N6-acetyllysine; alternate. Lys-10 carries the N6-methyllysine; alternate modification. Phosphoserine is present on Ser-11. Thr-12 is subject to Phosphothreonine. N6-acetyllysine is present on residues Lys-15, Lys-19, and Lys-24. An N6-acetyllysine; alternate modification is found at Lys-28. Lys-28 carries the N6-methyllysine; alternate modification. 2 positions are modified to N6-methyllysine: Lys-36 and Lys-37.

It belongs to the histone H3 family. As to quaternary structure, the nucleosome is a histone octamer containing two molecules each of H2A, H2B, H3 and H4 assembled in one H3-H4 heterotetramer and two H2A-H2B heterodimers. The octamer wraps approximately 147 bp of DNA. In terms of processing, acetylation is generally linked to gene activation. Acetylated to form H3K9ac (11%), H3K14ac (17%), H3K18ac (11%), H3K23ac (16%) and H3K27ac (7%). H3K4, H3K35 and H3K36 are not acetylated. H3K4me prevents acetylation. 32% of the histone H3 are acetylated with, on average, 2.4 acetyl-Lys. They are all continuously deacatylated and re-acetylated with a half-life of approximately 2 minutes. Monomethylated to form H3K4me1 (81%), H3K9me1 (16%), H3K27me1 (25%), H3K35me1 (25%) and H3K36me1 (5%). No methylation at H3K14, H3K18 and H3K23. Methylated by a protein complex that includes Mut11. Set1 methylates specifically H3K4. H3K4me1 is associated with silenced euchromatin. Set3 forms H3K9me1, while H3K9me2 is undetected. H3K9me1 is specifically associated with silent, multi-copy transgenes. Post-translationally, no phosphorylation detected.

The protein localises to the nucleus. It localises to the chromosome. Functionally, core component of nucleosome. Nucleosomes wrap and compact DNA into chromatin, limiting DNA accessibility to the cellular machineries which require DNA as a template. Histones thereby play a central role in transcription regulation, DNA repair, DNA replication and chromosomal stability. DNA accessibility is regulated via a complex set of post-translational modifications of histones, also called histone code, and nucleosome remodeling. The polypeptide is Histone H3 type 3 (ch3-IV) (Chlamydomonas reinhardtii (Chlamydomonas smithii)).